The sequence spans 115 residues: Large ribosomal subunit protein bL19 (115 aa).

Belongs to the bacterial ribosomal protein bL19 family.

This protein is located at the 30S-50S ribosomal subunit interface and may play a role in the structure and function of the aminoacyl-tRNA binding site. This is Large ribosomal subunit protein bL19 from Citrobacter koseri (strain ATCC BAA-895 / CDC 4225-83 / SGSC4696).